Here is a 300-residue protein sequence, read N- to C-terminus: uncharacterized protein (300 aa).

The protein belongs to the histone deacetylase family.

Functionally, putative deacetylase. This is an uncharacterized protein from Picosynechococcus sp. (strain ATCC 27264 / PCC 7002 / PR-6) (Agmenellum quadruplicatum).